Here is a 649-residue protein sequence, read N- to C-terminus: Echinoderm microtubule-associated protein-like 2 (649 aa).

The tract at residues 10–649 is tandem atypical propeller in EMLs; that stretch reads KEVIFSMEEG…DTSVLQWRVA (640 aa). WD repeat units follow at residues 56–93, 97–144, 151–192, 195–234, 241–280, 285–323, 369–406, 410–447, 452–489, 495–535, 564–602, and 609–648; these read KLDW…LYSV, RQRH…VWDS, HVLG…VWDW, ESKV…FWSL, KRQG…VWGK, ITQE…LWGS, FSLL…LWSS, QPVW…LLDT, LVAI…VYTV, KVSR…YWDA, FGIW…LFSY, and ALSH…QWRV.

This sequence belongs to the WD repeat EMAP family. Interacts with GRID2 and may also interact with GRID1. Interacts with EML3. Binds unpolymerized tubulins via its WD repeat region. Widely expressed in both brain and peripheral tissues, including brainstem and enrichment in the postsynaptic density, PSD.

The protein localises to the cytoplasm. It is found in the cytoskeleton. Its subcellular location is the spindle. Its function is as follows. Tubulin binding protein that inhibits microtubule nucleation and growth, resulting in shorter microtubules. This Rattus norvegicus (Rat) protein is Echinoderm microtubule-associated protein-like 2 (Eml2).